We begin with the raw amino-acid sequence, 739 residues long: Thiamine biosynthesis multifunctional protein ThiED (739 aa).

A thiamine-phosphate synthase region spans residues 1–210 (MTDFSLYLVT…PSPAEAAREL (210 aa)). 4-amino-2-methyl-5-(diphosphooxymethyl)pyrimidine-binding positions include 37 to 41 (QLRDK) and Asn-69. Mg(2+)-binding residues include Asp-70 and Asp-88. 4-amino-2-methyl-5-(diphosphooxymethyl)pyrimidine is bound at residue Thr-107. Residue 140-142 (TDT) participates in 2-[(2R,5Z)-2-carboxy-4-methylthiazol-5(2H)-ylidene]ethyl phosphate binding. Lys-143 is a binding site for 4-amino-2-methyl-5-(diphosphooxymethyl)pyrimidine. Residues Gly-174 and 194–195 (VS) each bind 2-[(2R,5Z)-2-carboxy-4-methylthiazol-5(2H)-ylidene]ethyl phosphate. Residues 226–481 (LTIAGTDPTG…GSGSGPVDHF (256 aa)) are hydroxymethylpyrimidine/phosphomethylpyrimidine kinase. Gln-263 lines the 4-amino-5-hydroxymethyl-2-methylpyrimidine pocket. A thiaminase-2 region spans residues 527 to 739 (YTRALWEATG…FDQATRQGWN (213 aa)).

This sequence in the N-terminal section; belongs to the thiamine-phosphate synthase family. The protein in the central section; belongs to the ThiD family. In the C-terminal section; belongs to the thiaminase-2 family. Requires Mg(2+) as cofactor.

It catalyses the reaction 2-[(2R,5Z)-2-carboxy-4-methylthiazol-5(2H)-ylidene]ethyl phosphate + 4-amino-2-methyl-5-(diphosphooxymethyl)pyrimidine + 2 H(+) = thiamine phosphate + CO2 + diphosphate. The catalysed reaction is 2-(2-carboxy-4-methylthiazol-5-yl)ethyl phosphate + 4-amino-2-methyl-5-(diphosphooxymethyl)pyrimidine + 2 H(+) = thiamine phosphate + CO2 + diphosphate. It carries out the reaction 4-methyl-5-(2-phosphooxyethyl)-thiazole + 4-amino-2-methyl-5-(diphosphooxymethyl)pyrimidine + H(+) = thiamine phosphate + diphosphate. The enzyme catalyses 4-amino-5-hydroxymethyl-2-methylpyrimidine + ATP = 4-amino-2-methyl-5-(phosphooxymethyl)pyrimidine + ADP + H(+). It catalyses the reaction 4-amino-2-methyl-5-(phosphooxymethyl)pyrimidine + ATP = 4-amino-2-methyl-5-(diphosphooxymethyl)pyrimidine + ADP. Its pathway is cofactor biosynthesis; thiamine diphosphate biosynthesis; 4-amino-2-methyl-5-diphosphomethylpyrimidine from 5-amino-1-(5-phospho-D-ribosyl)imidazole: step 3/3. It functions in the pathway cofactor biosynthesis; thiamine diphosphate biosynthesis; thiamine phosphate from 4-amino-2-methyl-5-diphosphomethylpyrimidine and 4-methyl-5-(2-phosphoethyl)-thiazole: step 1/1. In terms of biological role, condenses 4-methyl-5-(beta-hydroxyethyl)thiazole monophosphate (THZ-P) and 2-methyl-4-amino-5-hydroxymethyl pyrimidine pyrophosphate (HMP-PP) to form thiamine monophosphate (TMP). Functionally, catalyzes the phosphorylation of hydroxymethylpyrimidine phosphate (HMP-P) to HMP-PP, and of HMP to HMP-P. The protein is Thiamine biosynthesis multifunctional protein ThiED (thiED) of Corynebacterium efficiens (strain DSM 44549 / YS-314 / AJ 12310 / JCM 11189 / NBRC 100395).